The sequence spans 80 residues: Exodeoxyribonuclease 7 small subunit (80 aa).

It belongs to the XseB family. As to quaternary structure, heterooligomer composed of large and small subunits.

It localises to the cytoplasm. The catalysed reaction is Exonucleolytic cleavage in either 5'- to 3'- or 3'- to 5'-direction to yield nucleoside 5'-phosphates.. Its function is as follows. Bidirectionally degrades single-stranded DNA into large acid-insoluble oligonucleotides, which are then degraded further into small acid-soluble oligonucleotides. This is Exodeoxyribonuclease 7 small subunit from Edwardsiella ictaluri (strain 93-146).